A 62-amino-acid chain; its full sequence is Photosystem II reaction center protein Z (62 aa).

2 helical membrane passes run 8 to 28 (ALAALVALSFLMVIGVPVAYA) and 41 to 61 (FVGSIAWTVLVIAVGVLNFFV).

Belongs to the PsbZ family. As to quaternary structure, PSII is composed of 1 copy each of membrane proteins PsbA, PsbB, PsbC, PsbD, PsbE, PsbF, PsbH, PsbI, PsbJ, PsbK, PsbL, PsbM, PsbT, PsbX, PsbY, PsbZ, Psb30/Ycf12, peripheral proteins PsbO, CyanoQ (PsbQ), PsbU, PsbV and a large number of cofactors. It forms dimeric complexes.

It localises to the cellular thylakoid membrane. Functionally, may control the interaction of photosystem II (PSII) cores with the light-harvesting antenna, regulates electron flow through the 2 photosystem reaction centers. PSII is a light-driven water plastoquinone oxidoreductase, using light energy to abstract electrons from H(2)O, generating a proton gradient subsequently used for ATP formation. The sequence is that of Photosystem II reaction center protein Z from Picosynechococcus sp. (strain ATCC 27264 / PCC 7002 / PR-6) (Agmenellum quadruplicatum).